We begin with the raw amino-acid sequence, 870 residues long: Probable disease resistance protein At1g59620 (870 aa).

Residues 123–432 (DKRNMRQTFS…AAEGMPRPRY (310 aa)) enclose the NB-ARC domain. Residue 167-174 (GMGGIGKT) coordinates ATP. LRR repeat units follow at residues 543-567 (LQLM…IGLL), 568-590 (IHLR…MQNL), 703-726 (MSGI…IYMP), 735-758 (PWHL…ILEK), 759-786 (LLQL…GFPQ), and 808-833 (MPRL…KFIT).

This sequence belongs to the disease resistance NB-LRR family.

Probable disease resistance protein. The chain is Probable disease resistance protein At1g59620 from Arabidopsis thaliana (Mouse-ear cress).